A 246-amino-acid chain; its full sequence is Osmotin-like protein TPM-1 (246 aa).

The first 21 residues, 1–21 (MAYLRSSFVFFLLAFVTYTYA), serve as a signal peptide directing secretion. Intrachain disulfides connect C30-C225, C72-C82, C87-C93, C141-C213, C146-C196, C154-C164, C168-C177, and C178-C183.

Belongs to the thaumatin family.

Its subcellular location is the vacuole. It catalyses the reaction Endohydrolysis of (1-&gt;3)- or (1-&gt;4)-linkages in beta-D-glucans when the glucose residue whose reducing group is involved in the linkage to be hydrolyzed is itself substituted at C-3.. Functionally, antifungal protein that inhibits the growth of several phytopathogenic fungi (e.g. Trichothecium roseum, Fusarium oxysporum, Phytophthora citrophthora and Colletotrichum coccodes). May bind to beta-glucans and have beta-1,3-D-glucanase activity. In Solanum lycopersicum (Tomato), this protein is Osmotin-like protein TPM-1.